The sequence spans 239 residues: Phosphoribosylaminoimidazole-succinocarboxamide synthase (239 aa).

The protein belongs to the SAICAR synthetase family.

It carries out the reaction 5-amino-1-(5-phospho-D-ribosyl)imidazole-4-carboxylate + L-aspartate + ATP = (2S)-2-[5-amino-1-(5-phospho-beta-D-ribosyl)imidazole-4-carboxamido]succinate + ADP + phosphate + 2 H(+). Its pathway is purine metabolism; IMP biosynthesis via de novo pathway; 5-amino-1-(5-phospho-D-ribosyl)imidazole-4-carboxamide from 5-amino-1-(5-phospho-D-ribosyl)imidazole-4-carboxylate: step 1/2. The protein is Phosphoribosylaminoimidazole-succinocarboxamide synthase of Bacillus cereus (strain 03BB102).